Consider the following 101-residue polypeptide: Small ribosomal subunit protein uS14 (101 aa).

The protein belongs to the universal ribosomal protein uS14 family. As to quaternary structure, part of the 30S ribosomal subunit. Contacts proteins S3 and S10.

Its function is as follows. Binds 16S rRNA, required for the assembly of 30S particles and may also be responsible for determining the conformation of the 16S rRNA at the A site. The chain is Small ribosomal subunit protein uS14 from Shewanella sp. (strain ANA-3).